Consider the following 226-residue polypeptide: RPA-interacting protein A (226 aa).

Residues 1-45 are interaction with importin beta; the sequence is MEAERRHRALYKGTTPPWKETYRKRCVERLKRNRSKLLDKFRQVG. Residues 49–171 are interaction with RPA1; the sequence is HGGVGGSFLV…QCGVYINTQS (123 aa). Residues 144–219 form an RIP-type zinc finger; that stretch reads CPVCNRNYLT…ASLFMSCQEC (76 aa).

In terms of assembly, interacts directly with the rpa1 subunit of RPA complex. Interacts with importin beta, but not with importin alpha. Forms a complex with the RPA complex and importin beta, which is dissociated by Ran-GTP.

The protein localises to the nucleus. Mediates the import of RPA complex into the nucleus, via its interaction with importin beta. In Xenopus laevis (African clawed frog), this protein is RPA-interacting protein A (rpain-a).